The primary structure comprises 588 residues: Serine/threonine-protein kinase CBK1 (588 aa).

2 disordered regions span residues Met-1–Gln-76 and Gln-100–Ala-139. Polar residues predominate over residues Leu-29–Asp-42. Low complexity-rich tracts occupy residues Gln-43–Gln-76 and Gln-100–Gln-117. The Protein kinase domain maps to Phe-207–Phe-517. Residues Ile-213–Val-221 and Lys-236 contribute to the ATP site. Residue Asp-330 is the Proton acceptor of the active site. Residues Gly-370–Ser-389 are disordered. In terms of domain architecture, AGC-kinase C-terminal spans Arg-518–Asn-586.

The protein belongs to the protein kinase superfamily. STE Ser/Thr protein kinase family. COT1 subfamily.

The enzyme catalyses L-seryl-[protein] + ATP = O-phospho-L-seryl-[protein] + ADP + H(+). The catalysed reaction is L-threonyl-[protein] + ATP = O-phospho-L-threonyl-[protein] + ADP + H(+). Functionally, protein kinase that seems to play a role in the regulation of cell morphogenesis and proliferation. The sequence is that of Serine/threonine-protein kinase CBK1 (CBK1) from Yarrowia lipolytica (strain CLIB 122 / E 150) (Yeast).